The following is a 200-amino-acid chain: ATP-dependent Clp protease proteolytic subunit (200 aa).

The active-site Nucleophile is Ser99. His124 is an active-site residue.

Belongs to the peptidase S14 family. In terms of assembly, fourteen ClpP subunits assemble into 2 heptameric rings which stack back to back to give a disk-like structure with a central cavity, resembling the structure of eukaryotic proteasomes.

It localises to the cytoplasm. It catalyses the reaction Hydrolysis of proteins to small peptides in the presence of ATP and magnesium. alpha-casein is the usual test substrate. In the absence of ATP, only oligopeptides shorter than five residues are hydrolyzed (such as succinyl-Leu-Tyr-|-NHMec, and Leu-Tyr-Leu-|-Tyr-Trp, in which cleavage of the -Tyr-|-Leu- and -Tyr-|-Trp bonds also occurs).. In terms of biological role, cleaves peptides in various proteins in a process that requires ATP hydrolysis. Has a chymotrypsin-like activity. Plays a major role in the degradation of misfolded proteins. This Syntrophomonas wolfei subsp. wolfei (strain DSM 2245B / Goettingen) protein is ATP-dependent Clp protease proteolytic subunit.